A 110-amino-acid polypeptide reads, in one-letter code: UPF0251 protein PYRAB12660 (110 aa).

Belongs to the UPF0251 family.

The sequence is that of UPF0251 protein PYRAB12660 from Pyrococcus abyssi (strain GE5 / Orsay).